The primary structure comprises 141 residues: Globin, extracellular monomeric (141 aa).

The 141-residue stretch at 1–141 (ECDALQRFKV…LGVITGAIHD (141 aa)) folds into the Globin domain. A disulfide bond links C2 and C131. Residue H94 participates in heme b binding.

This sequence belongs to the globin family. As to quaternary structure, the giant hemoglobins of worms are formed of a monomeric subunit and a disulfide-bonded trimer. This subunit is monomeric.

It localises to the secreted. This chain is Globin, extracellular monomeric, found in Tubifex tubifex (Sludge worm).